The primary structure comprises 321 residues: Arabinan endo-1,5-alpha-L-arabinosidase A (321 aa).

An N-terminal signal peptide occupies residues 1 to 19; it reads MYSLLTALSVPLLAGLAHG. Asp34 acts as the Proton acceptor in catalysis. N-linked (GlcNAc...) asparagine glycosylation is present at Asn192. Glu200 serves as the catalytic Proton donor.

Belongs to the glycosyl hydrolase 43 family.

Its subcellular location is the secreted. The catalysed reaction is Endohydrolysis of (1-&gt;5)-alpha-arabinofuranosidic linkages in (1-&gt;5)-arabinans.. The protein operates within glycan metabolism; L-arabinan degradation. Functionally, endo-1,5-alpha-L-arabinanase involved in degradation of pectin. Its preferred substrate is linear 1,5-alpha-L-arabinan. This is Arabinan endo-1,5-alpha-L-arabinosidase A (abnA) from Aspergillus aculeatus.